The sequence spans 639 residues: tRNA uridine 5-carboxymethylaminomethyl modification enzyme MnmG (639 aa).

FAD is bound at residue 15-20 (GAGHAG). 276–290 (GPRYCPSIEDKIVRF) provides a ligand contact to NAD(+).

Belongs to the MnmG family. Homodimer. Heterotetramer of two MnmE and two MnmG subunits. The cofactor is FAD.

The protein localises to the cytoplasm. Its function is as follows. NAD-binding protein involved in the addition of a carboxymethylaminomethyl (cmnm) group at the wobble position (U34) of certain tRNAs, forming tRNA-cmnm(5)s(2)U34. This Streptococcus gordonii (strain Challis / ATCC 35105 / BCRC 15272 / CH1 / DL1 / V288) protein is tRNA uridine 5-carboxymethylaminomethyl modification enzyme MnmG.